The chain runs to 460 residues: 4-O-methyl-glucuronoyl methylesterase (460 aa).

Residues M1–A17 form the signal peptide. At Q18 the chain carries Pyrrolidone carboxylic acid. A CBM1 domain is found at Q18–I53. 3 disulfide bridges follow: C96/C131, C277/C412, and C309/C384. A GXSYXG catalytic site motif motif is present at residues G276 to G281. Residue S278 is the Nucleophile of the active site. Residues K282, Q324, E332, and W375 each contribute to the substrate site. The active-site Proton donor/acceptor is H411. N447 carries N-linked (GlcNAc...) asparagine glycosylation.

This sequence belongs to the carbohydrate esterase 15 (CE15) family.

Its subcellular location is the secreted. The catalysed reaction is a 4-O-methyl-alpha-D-glucuronosyl ester derivative + H2O = 4-O-methyl-alpha-D-glucuronate derivative + an alcohol + H(+). Its function is as follows. Glucuronoyl esterase which may play a significant role in biomass degradation, as it is considered to disconnect hemicellulose from lignin through the hydrolysis of the ester bond between 4-O-methyl-D-glucuronic acid residues of glucuronoxylans and aromatic alcohols of lignin. Does not hydrolyze substrates of other carbohydrate esterases such as acetylxylan esterase, acetyl esterase and feruloyl esterase. The chain is 4-O-methyl-glucuronoyl methylesterase from Hypocrea jecorina (strain QM6a) (Trichoderma reesei).